The primary structure comprises 361 residues: Nicotinate-nucleotide--dimethylbenzimidazole phosphoribosyltransferase (361 aa).

Glutamate 315 (proton acceptor) is an active-site residue.

It belongs to the CobT family.

It catalyses the reaction 5,6-dimethylbenzimidazole + nicotinate beta-D-ribonucleotide = alpha-ribazole 5'-phosphate + nicotinate + H(+). The protein operates within nucleoside biosynthesis; alpha-ribazole biosynthesis; alpha-ribazole from 5,6-dimethylbenzimidazole: step 1/2. In terms of biological role, catalyzes the synthesis of alpha-ribazole-5'-phosphate from nicotinate mononucleotide (NAMN) and 5,6-dimethylbenzimidazole (DMB). This is Nicotinate-nucleotide--dimethylbenzimidazole phosphoribosyltransferase from Clostridium perfringens (strain ATCC 13124 / DSM 756 / JCM 1290 / NCIMB 6125 / NCTC 8237 / Type A).